The primary structure comprises 52 residues: Histone H2A (52 aa).

Residues 1–25 are disordered; that stretch reads MSGRGKTGGKARAKAKTRSSRAGLQ. Ser2 is modified (N-acetylserine). Ser2 carries the post-translational modification Phosphoserine. Lys6 carries the post-translational modification N6-(2-hydroxyisobutyryl)lysine. Lys6 bears the N6-acetyllysine mark. Over residues 7 to 19 the composition is skewed to basic residues; the sequence is TGGKARAKAKTRS. Lys10 is modified (N6-(2-hydroxyisobutyryl)lysine; alternate). N6-lactoyllysine; alternate is present on Lys10. Lys10 carries the post-translational modification N6-succinyllysine. Residues Lys14 and Lys16 each participate in a glycyl lysine isopeptide (Lys-Gly) (interchain with G-Cter in ubiquitin) cross-link. Lys37 carries the post-translational modification N6-(2-hydroxyisobutyryl)lysine; alternate.

The nucleosome is a histone octamer containing two molecules each of H2A, H2B, H3 and H4 assembled in one H3-H4 heterotetramer and two H2A-H2B heterodimers. The octamer wraps approximately 147 bp of DNA. In terms of processing, acetylation is not necessary for the antibacterial activity. Monoubiquitination in C-terminus gives a specific tag for epigenetic transcriptional repression. Following DNA double-strand breaks (DSBs), it is ubiquitinated through 'Lys-63' linkage of ubiquitin moieties, leading to the recruitment of repair proteins to sites of DNA damage. H2AK119Ub and ionizing radiation-induced 'Lys-63'-linked ubiquitination are distinct events. Post-translationally, phosphorylation on Ser-2 is enhanced during mitosis. Phosphorylation on Ser-2 directly represses transcription.

The protein resides in the nucleus. Its subcellular location is the chromosome. It is found in the secreted. In terms of biological role, core component of nucleosome. Nucleosomes wrap and compact DNA into chromatin, limiting DNA accessibility to the cellular machineries which require DNA as a template. Histones thereby play a central role in transcription regulation, DNA repair, DNA replication and chromosomal stability. DNA accessibility is regulated via a complex set of post-translational modifications of histones, also called histone code, and nucleosome remodeling. Its function is as follows. Hipposin shows strong antimicrobial activity against several Gram-positive and Gram-negative bacteria. The chain is Histone H2A from Hippoglossus hippoglossus (Atlantic halibut).